The following is a 278-amino-acid chain: MMTQAKVGLGLRREMLDEFCQSVPGAIDFFEVAPENWMTLGGKFGRQFRQLTEKHKFFCHGLSLSIGGPEPLDTRFVKQIKTFLDHHDIEIYSEHLSYCSGKGHLYDLMPIPFTDEAVRHVARRIEQVQDILERPFILENVSFYASPASEMSECEFVSAVLEEADCRLLLDVNNIYVNSINHQYDAEAFLRAMPSERIAYLHIAGHYDEAEDLKVDTHGSEVIDPVWRLLAICYQTHGVFPTLLERDFNIPATHELLKEINKIHGYQTKALQPSHRSA.

This sequence belongs to the UPF0276 family.

The polypeptide is UPF0276 protein Shew_2240 (Shewanella loihica (strain ATCC BAA-1088 / PV-4)).